Reading from the N-terminus, the 474-residue chain is Glutathione synthetase (474 aa).

The residue at position 2 (Ala2) is an N-acetylalanine. Substrate is bound at residue Arg125. Residue Glu144 participates in ATP binding. Positions 144 and 146 each coordinate Mg(2+). Substrate is bound by residues Ile148 to Ser151, Glu214 to Asn216, Gln220, and Arg267 to Tyr270. ATP-binding positions include Lys305, Lys364–Asn373, Tyr375, and Met398–Ile401. Residue Glu368 coordinates Mg(2+). Phosphoserine is present on Ser415. Residue Glu425 participates in ATP binding. A substrate-binding site is contributed by Arg450. ATP is bound by residues Lys452 and Asp458. Val461–Ala462 is a substrate binding site.

It belongs to the eukaryotic GSH synthase family. Homodimer. It depends on Mg(2+) as a cofactor.

It carries out the reaction gamma-L-glutamyl-L-cysteine + glycine + ATP = glutathione + ADP + phosphate + H(+). The enzyme catalyses gamma-L-glutamyl-(2S)-2-aminobutanoate + glycine + ATP = ophthalmate + ADP + phosphate + H(+). Its pathway is sulfur metabolism; glutathione biosynthesis; glutathione from L-cysteine and L-glutamate: step 2/2. In terms of biological role, catalyzes the production of glutathione from gamma-glutamylcysteine and glycine in an ATP-dependent manner. Glutathione (gamma-glutamylcysteinylglycine, GSH) is the most abundant intracellular thiol in living aerobic cells and is required for numerous processes including the protection of cells against oxidative damage, amino acid transport, the detoxification of foreign compounds, the maintenance of protein sulfhydryl groups in a reduced state and acts as a cofactor for a number of enzymes. Participates in ophthalmate biosynthesis in hepatocytes. The protein is Glutathione synthetase of Rattus norvegicus (Rat).